We begin with the raw amino-acid sequence, 244 residues long: S-adenosyl-L-methionine-dependent Diels-Alderase iliD (244 aa).

The protein belongs to the class I-like SAM-binding methyltransferase superfamily. Erg6/SMT family. Requires S-adenosyl-L-methionine as cofactor.

It catalyses the reaction 3-[(2E,4E,8S,10E,12Z)-4,8-dimethyltetradeca-2,4,10,12-tetraenoyl]-4-hydroxy-5-(4-hydroxyphenyl)-1,2-dihydropyridin-2-one = ilicicolin H. Its pathway is mycotoxin biosynthesis. Its function is as follows. S-adenosyl-l-methionine-dependent Diels-Alderase; part of the gene cluster that mediates the biosynthesis of ilicicolin H, a 4-hydroxy-2-pyridonealkaloid that has potent and broad antifungal activities by inhibiting the mitochondrial respiration chain. IliD catalyzes the Diels-Alder reaction that converts the acyclic 2-pyridone intermediate to 8-epi-ilicicolin H. The biosynthesis of ilicicolin H starts with formation of the tetramic acid by the hybrid PKS-NRPS synthetase iliA with the partnering trans-enoyl reductase iliB since iliA lacks a designated enoylreductase (ER) domain. The cytochrome P450 monooxygenase iliC then catalyzes the ring expansion of the tetramate to the acyclic 2-pyridone. The pericyclase iliD further converts the acyclic 2-pyridone into 8-epi-ilicicolin H. 8-epi-ilicicolin H might then spontaneously convert to ilicicolin H since ilicicolin H is produced in the absence of the epimerase iliE, in contrast to what was observed for the Talaromyces variabilis ilicolin H biosynthetic pathway. The protein is S-adenosyl-L-methionine-dependent Diels-Alderase iliD of Neonectria sp. (strain DH2).